Reading from the N-terminus, the 183-residue chain is Adenine phosphoribosyltransferase (183 aa).

The protein belongs to the purine/pyrimidine phosphoribosyltransferase family. In terms of assembly, homodimer.

It is found in the cytoplasm. The enzyme catalyses AMP + diphosphate = 5-phospho-alpha-D-ribose 1-diphosphate + adenine. It participates in purine metabolism; AMP biosynthesis via salvage pathway; AMP from adenine: step 1/1. Functionally, catalyzes a salvage reaction resulting in the formation of AMP, that is energically less costly than de novo synthesis. The chain is Adenine phosphoribosyltransferase from Edwardsiella ictaluri (strain 93-146).